The chain runs to 595 residues: Aspartate--tRNA ligase (595 aa).

Position 173 (E173) interacts with L-aspartate. The tract at residues 197–200 is aspartate; that stretch reads QLFK. R219 contributes to the L-aspartate binding site. Residues 219 to 221 and Q228 each bind ATP; that span reads RDE. H449 contributes to the L-aspartate binding site. E483 provides a ligand contact to ATP. Residue R490 participates in L-aspartate binding. Residue 535–538 participates in ATP binding; the sequence is GLDR.

It belongs to the class-II aminoacyl-tRNA synthetase family. Type 1 subfamily. Homodimer.

It localises to the cytoplasm. It carries out the reaction tRNA(Asp) + L-aspartate + ATP = L-aspartyl-tRNA(Asp) + AMP + diphosphate. Catalyzes the attachment of L-aspartate to tRNA(Asp) in a two-step reaction: L-aspartate is first activated by ATP to form Asp-AMP and then transferred to the acceptor end of tRNA(Asp). In Shewanella woodyi (strain ATCC 51908 / MS32), this protein is Aspartate--tRNA ligase.